Here is a 129-residue protein sequence, read N- to C-terminus: SOSS complex subunit C homolog (129 aa).

Residues 105-129 (RLEPLPSPATTPTTPNAPPSHNISK) form a disordered region.

Belongs to the SOSS-C family.

In Drosophila erecta (Fruit fly), this protein is SOSS complex subunit C homolog.